Reading from the N-terminus, the 513-residue chain is Putative thymidine phosphorylase 2 (513 aa).

It belongs to the thymidine/pyrimidine-nucleoside phosphorylase family. Type 2 subfamily.

The catalysed reaction is thymidine + phosphate = 2-deoxy-alpha-D-ribose 1-phosphate + thymine. The protein is Putative thymidine phosphorylase 2 of Acidovorax sp. (strain JS42).